A 522-amino-acid polypeptide reads, in one-letter code: Cytochrome P450 monooxygenase sirB (522 aa).

The chain crosses the membrane as a helical span at residues 22–42; the sequence is ASAILFCTLLTVFLFISQGTV. N191 carries an N-linked (GlcNAc...) asparagine glycan. Residues 304–324 traverse the membrane as a helical segment; that stretch reads VLHLSFAATGTVAILITHMIY. A heme-binding site is contributed by C462.

Belongs to the cytochrome P450 family. Requires heme as cofactor.

Its subcellular location is the membrane. Its pathway is mycotoxin biosynthesis. Functionally, cytochrome P450 monooxygenase; part of the gene cluster that mediates the biosynthesis of sirodesmin PL, an epipolythiodioxopiperazine (ETP) characterized by a disulfide bridged cyclic dipeptide and that acts as a phytotoxin which is involved in the blackleg didease of canola. SirD catalyzes the O-prenylation of L-tyrosine (L-Tyr) in the presence of dimethylallyl diphosphate (DMAPP) to yield 4-O-dimethylallyl-L-Tyr, and therefore represents probably the first pathway-specific enzyme in the biosynthesis of sirodesmin PL. 4-O-dimethylallyl-L-Tyr, then undergoes condensation with L-Ser in a reaction catalyzed by the non-ribosomal peptide synthase sirP to form the diketopiperazine (DKP) backbone. Further bishydroxylation of the DKP performed by the cytochrome P450 monooxygenase sirC leads to the production of the intermediate phomamide. This step is essential to form the reactive thiol group required for toxicity of sirodesmin PL. The next steps of sirodesmin biosynthesis are not well understood yet, but some predictions could be made from intermediate compounds identification. Phomamide is converted into phomalizarine via oxidation, probably by sirT. Further oxidation, methylation (by sirM or sirN) and reduction steps convert phomalizarine to deacetyl sirodesmin. Finally, acetyltransferase sirH probably acetylates deacetyl sirodesmin to produce sirodesmin PL. The protein is Cytochrome P450 monooxygenase sirB of Leptosphaeria maculans (Blackleg fungus).